We begin with the raw amino-acid sequence, 552 residues long: uncharacterized protein (552 aa).

Residues 8–200 (KLFADMIIQG…LLCVYEGFLK (193 aa)) enclose the DhaL domain.

This is an uncharacterized protein from Staphylococcus epidermidis (strain ATCC 35984 / DSM 28319 / BCRC 17069 / CCUG 31568 / BM 3577 / RP62A).